A 450-amino-acid polypeptide reads, in one-letter code: V-type proton ATPase subunit H (450 aa).

It belongs to the V-ATPase H subunit family. As to quaternary structure, V-ATPase is a heteromultimeric enzyme composed of a peripheral catalytic V1 complex (components A to H) attached to an integral membrane V0 proton pore complex (components: a, c, c', c'', d, e, f and VOA1).

The protein localises to the vacuole membrane. In terms of biological role, subunit of the V1 complex of vacuolar(H+)-ATPase (V-ATPase), a multisubunit enzyme composed of a peripheral complex (V1) that hydrolyzes ATP and a membrane integral complex (V0) that translocates protons. V-ATPase is responsible for acidifying and maintaining the pH of intracellular compartments. This subunit is essential for activity, but not assembly, of the enzyme complex. This subunit is also required for silencing the ATPase activity of V-ATPase when V1 is detached from V0. This is V-type proton ATPase subunit H (vma13) from Schizosaccharomyces pombe (strain 972 / ATCC 24843) (Fission yeast).